Reading from the N-terminus, the 212-residue chain is 3-isopropylmalate dehydratase small subunit 2 (212 aa).

This sequence belongs to the LeuD family. LeuD type 1 subfamily. In terms of assembly, heterodimer of LeuC and LeuD.

It catalyses the reaction (2R,3S)-3-isopropylmalate = (2S)-2-isopropylmalate. It participates in amino-acid biosynthesis; L-leucine biosynthesis; L-leucine from 3-methyl-2-oxobutanoate: step 2/4. In terms of biological role, catalyzes the isomerization between 2-isopropylmalate and 3-isopropylmalate, via the formation of 2-isopropylmaleate. The sequence is that of 3-isopropylmalate dehydratase small subunit 2 from Chromobacterium violaceum (strain ATCC 12472 / DSM 30191 / JCM 1249 / CCUG 213 / NBRC 12614 / NCIMB 9131 / NCTC 9757 / MK).